The sequence spans 347 residues: Haptoglobin (347 aa).

The signal sequence occupies residues 1–18; the sequence is MRALGAVVTLLLWGQLFA. In terms of domain architecture, Sushi spans 31–88; that stretch reads DSCPKPPEIANGYVEHLVRYRCRQFYKLQTEGDGIYTLNSEKQWVNPAAGDKLPKCEA. 4 cysteine pairs are disulfide-bonded: cysteine 52–cysteine 86, cysteine 90–cysteine 207, cysteine 250–cysteine 281, and cysteine 292–cysteine 322. A Peptidase S1 domain is found at 103 to 345; sequence IIGGSMDAKG…LKDWVQETMA (243 aa). 2 N-linked (GlcNAc...) asparagine glycosylation sites follow: asparagine 148 and asparagine 152. The interaction with CD163 stretch occupies residues 259-264; the sequence is VPEKKG.

The protein belongs to the peptidase S1 family. As to quaternary structure, tetramer of two alpha and two beta chains; disulfide-linked. The hemoglobin/haptoglobin complex is composed of a haptoglobin dimer bound to two hemoglobin alpha-beta dimers. Interacts with CD163. Interacts with ERGIC3. Expressed by the liver and secreted in plasma.

It is found in the secreted. In terms of biological role, as a result of hemolysis, hemoglobin is found to accumulate in the kidney and is secreted in the urine. Haptoglobin captures, and combines with free plasma hemoglobin to allow hepatic recycling of heme iron and to prevent kidney damage. Haptoglobin also acts as an antioxidant, has antibacterial activity and plays a role in modulating many aspects of the acute phase response. Hemoglobin/haptoglobin complexes are rapidly cleared by the macrophage CD163 scavenger receptor expressed on the surface of liver Kupfer cells through an endocytic lysosomal degradation pathway. The chain is Haptoglobin (Hp) from Rattus norvegicus (Rat).